An 86-amino-acid chain; its full sequence is U22-theraphotoxin-Cg1a (86 aa).

The signal sequence occupies residues 1-20; that stretch reads MKVSVVLAITVLALLSVAYA. Positions 21–51 are excised as a propeptide; the sequence is SEFEEKELVKEVVRTIFLGKEDAALREETDR. 3 disulfides stabilise this stretch: C53–C67, C60–C72, and C66–C79. The residue at position 85 (F85) is a Phenylalanine amide.

This sequence belongs to the neurotoxin 10 (Hwtx-1) family. 42 (Jztx-44) subfamily. As to expression, expressed by the venom gland.

The protein resides in the secreted. In terms of biological role, probable ion channel inhibitor. This is U22-theraphotoxin-Cg1a from Chilobrachys guangxiensis (Chinese earth tiger tarantula).